The sequence spans 819 residues: MDSFFKNSYLDPKAVRAQLPKRADLAAPSEPMTVALAISGSIKSKNVIKWALNKFGSDKNVTFKLIHIHPKITTLPTASGNIVSISEELEEVAAAYRQKVMQETKETLLKPFKKMCERKKLKIDETRFESSLTKVAVELQVLESNSVAVAITKEVNQHLISNLIIGRSSQAASSRNYDITASISASVSNLCTVYVVSNGGVHILAKDTSDTERNDTSIESGFERTSSSCSSGSGANSDVMSNALKSNPHTLSNKRMQNLPTIVRGVSVPMETSSTESDETKKRSSDAAEEASKRSSPETSRSVSWNPQFRDFDERKDAMSSMSSNFEYGNVVTPLGHYFTDNQDTLNEISKLRAELRHAHEMYAVAQVETLDASRKLNELKFEELTLLEHETKGIAKKETEKFEQKRREEREAAQRREAEMKATHEAKEKEKLEESSLVAPKLQYQEFTWEEIINATSSFSEDLKIGMGAYGDVYKCNLHHTIAAVKVLHSAESSLSKQFDQELEILSKIRHPHLVLLLGACPDHGALVYEYMENGSLEDRLFQVNDSQPIPWFVRLRIAWEVASALVFLHKSKPTPIIHRDLKPANILLNHNFVSKVGDVGLSTMIQAADPLSTKFTMYKQTSPVGTLCYIDPEYQRTGRISPKSDVYAFGMIILQLLTGQQAMALTYTVETAMENNNDDELIQILDEKAGNWPIEETRQLAALALQCTELRSKDRPDLEDQILPVLESLKKVADKARNSLSAAPSQPPSHFFCPLLKDVMKEPCIAADGYTYDRRAIEEWMENHRTSPVTNSPLQNVNLLPNHTLYAAIVEWRNRNQ.

Disordered stretches follow at residues Thr-208–Phe-309 and Lys-398–Leu-433. Positions Glu-223 to Ser-237 are enriched in low complexity. Residues Asp-238–Pro-260 show a composition bias toward polar residues. The span at Asp-278–Ser-296 shows a compositional bias: basic and acidic residues. Residues Pro-297–Pro-307 are compositionally biased toward polar residues. A coiled-coil region spans residues Ile-395–Ser-437. One can recognise a Protein kinase domain in the interval Phe-460–Leu-728. Residues Ile-466–Val-474 and Lys-487 contribute to the ATP site. The active-site Proton acceptor is Asp-582. The region spanning Gln-748–Gln-819 is the U-box domain.

This sequence belongs to the protein kinase superfamily. Ser/Thr protein kinase family.

It carries out the reaction L-seryl-[protein] + ATP = O-phospho-L-seryl-[protein] + ADP + H(+). The enzyme catalyses L-threonyl-[protein] + ATP = O-phospho-L-threonyl-[protein] + ADP + H(+). It catalyses the reaction S-ubiquitinyl-[E2 ubiquitin-conjugating enzyme]-L-cysteine + [acceptor protein]-L-lysine = [E2 ubiquitin-conjugating enzyme]-L-cysteine + N(6)-ubiquitinyl-[acceptor protein]-L-lysine.. It functions in the pathway protein modification; protein ubiquitination. Functionally, functions as an E3 ubiquitin ligase. This chain is Putative U-box domain-containing protein 53 (PUB53), found in Arabidopsis thaliana (Mouse-ear cress).